A 155-amino-acid polypeptide reads, in one-letter code: Xanthine-guanine phosphoribosyltransferase 2 (155 aa).

5-phospho-alpha-D-ribose 1-diphosphate contacts are provided by residues 37–38 and 91–99; these read RG and DDLVDTGNT. Aspartate 92 is a binding site for Mg(2+). Positions 95 and 138 each coordinate guanine. Residues aspartate 95 and isoleucine 138 each coordinate xanthine. GMP is bound by residues 95–99 and 137–138; these read DTGNT and WI.

The protein belongs to the purine/pyrimidine phosphoribosyltransferase family. XGPT subfamily. In terms of assembly, homotetramer. Mg(2+) is required as a cofactor.

The protein localises to the cell inner membrane. It carries out the reaction GMP + diphosphate = guanine + 5-phospho-alpha-D-ribose 1-diphosphate. The catalysed reaction is XMP + diphosphate = xanthine + 5-phospho-alpha-D-ribose 1-diphosphate. It catalyses the reaction IMP + diphosphate = hypoxanthine + 5-phospho-alpha-D-ribose 1-diphosphate. The protein operates within purine metabolism; GMP biosynthesis via salvage pathway; GMP from guanine: step 1/1. It participates in purine metabolism; XMP biosynthesis via salvage pathway; XMP from xanthine: step 1/1. Purine salvage pathway enzyme that catalyzes the transfer of the ribosyl-5-phosphate group from 5-phospho-alpha-D-ribose 1-diphosphate (PRPP) to the N9 position of the 6-oxopurines guanine and xanthine to form the corresponding ribonucleotides GMP (guanosine 5'-monophosphate) and XMP (xanthosine 5'-monophosphate), with the release of PPi. To a lesser extent, also acts on hypoxanthine. This is Xanthine-guanine phosphoribosyltransferase 2 from Haemophilus influenzae (strain 86-028NP).